The sequence spans 293 residues: 4-hydroxy-tetrahydrodipicolinate synthase (293 aa).

Position 44 (Thr-44) interacts with pyruvate. Residue Tyr-132 is the Proton donor/acceptor of the active site. Residue Lys-161 is the Schiff-base intermediate with substrate of the active site. A pyruvate-binding site is contributed by Ile-203.

It belongs to the DapA family. In terms of assembly, homotetramer; dimer of dimers.

Its subcellular location is the cytoplasm. The enzyme catalyses L-aspartate 4-semialdehyde + pyruvate = (2S,4S)-4-hydroxy-2,3,4,5-tetrahydrodipicolinate + H2O + H(+). It participates in amino-acid biosynthesis; L-lysine biosynthesis via DAP pathway; (S)-tetrahydrodipicolinate from L-aspartate: step 3/4. In terms of biological role, catalyzes the condensation of (S)-aspartate-beta-semialdehyde [(S)-ASA] and pyruvate to 4-hydroxy-tetrahydrodipicolinate (HTPA). The protein is 4-hydroxy-tetrahydrodipicolinate synthase of Sulfurihydrogenibium sp. (strain YO3AOP1).